Reading from the N-terminus, the 647-residue chain is DNA mismatch repair protein MutL (647 aa).

The tract at residues glutamine 346–proline 378 is disordered.

It belongs to the DNA mismatch repair MutL/HexB family.

This protein is involved in the repair of mismatches in DNA. It is required for dam-dependent methyl-directed DNA mismatch repair. May act as a 'molecular matchmaker', a protein that promotes the formation of a stable complex between two or more DNA-binding proteins in an ATP-dependent manner without itself being part of a final effector complex. This Limosilactobacillus fermentum (strain NBRC 3956 / LMG 18251) (Lactobacillus fermentum) protein is DNA mismatch repair protein MutL.